A 439-amino-acid chain; its full sequence is Ribulose bisphosphate carboxylase/oxygenase activase 2, chloroplastic (439 aa).

A chloroplast-targeting transit peptide spans 1–58; the sequence is MATSVSTIGAANKAPLSLNNSVAGTSVPSTAFFGKTLKKVYGKGVSSPKVTNRSLRIA. An ATP-binding site is contributed by 169–176; sequence GGKGQGKS.

It belongs to the RuBisCO activase family.

It localises to the plastid. It is found in the chloroplast stroma. Activation of RuBisCO (ribulose-1,5-bisphosphate carboxylase/oxygenase; EC 4.1.1.39) involves the ATP-dependent carboxylation of the epsilon-amino group of lysine leading to a carbamate structure. This Nicotiana tabacum (Common tobacco) protein is Ribulose bisphosphate carboxylase/oxygenase activase 2, chloroplastic (RCA).